Consider the following 149-residue polypeptide: NADH-quinone oxidoreductase subunit A (149 aa).

The next 3 helical transmembrane spans lie at 16-36 (FAVFLLGAFGLCALMLLGAFF), 68-88 (FYLVAMFFVIFDVEALFLYAW), and 98-118 (LGFIEASIFILVLLAGLFYLV).

The protein belongs to the complex I subunit 3 family. NDH-1 is composed of 13 different subunits. Subunits NuoA, H, J, K, L, M, N constitute the membrane sector of the complex.

It localises to the cell inner membrane. The enzyme catalyses a quinone + NADH + 5 H(+)(in) = a quinol + NAD(+) + 4 H(+)(out). In terms of biological role, NDH-1 shuttles electrons from NADH, via FMN and iron-sulfur (Fe-S) centers, to quinones in the respiratory chain. The immediate electron acceptor for the enzyme in this species is believed to be ubiquinone. Couples the redox reaction to proton translocation (for every two electrons transferred, four hydrogen ions are translocated across the cytoplasmic membrane), and thus conserves the redox energy in a proton gradient. This is NADH-quinone oxidoreductase subunit A from Photorhabdus laumondii subsp. laumondii (strain DSM 15139 / CIP 105565 / TT01) (Photorhabdus luminescens subsp. laumondii).